The following is a 100-amino-acid chain: Large ribosomal subunit protein bL21 (100 aa).

Belongs to the bacterial ribosomal protein bL21 family. As to quaternary structure, part of the 50S ribosomal subunit. Contacts protein L20.

This protein binds to 23S rRNA in the presence of protein L20. The polypeptide is Large ribosomal subunit protein bL21 (Mycoplasmoides gallisepticum (strain R(low / passage 15 / clone 2)) (Mycoplasma gallisepticum)).